The following is a 368-amino-acid chain: Glucose 1-dehydrogenase 2 (368 aa).

C41 is a Zn(2+) binding site. T43 is a substrate binding site. 2 residues coordinate Zn(2+): H68 and E69. Residue N91 participates in substrate binding. Zn(2+) contacts are provided by C95, C98, C101, C109, and Q152. Positions 152 and 156 each coordinate substrate. NADP(+) is bound by residues 213–215 (NRR), 279–281 (FGF), 307–309 (LDN), and K356. N309 serves as a coordination point for substrate.

Belongs to the zinc-containing alcohol dehydrogenase family. Glucose 1-dehydrogenase subfamily. Zn(2+) serves as cofactor.

It carries out the reaction D-glucose + NAD(+) = D-glucono-1,5-lactone + NADH + H(+). The catalysed reaction is D-glucose + NADP(+) = D-glucono-1,5-lactone + NADPH + H(+). Functionally, catalyzes the NAD(P)(+)-dependent oxidation of D-glucose to D-gluconate via gluconolactone. Can utilize both NAD(+) and NADP(+) as electron acceptor. Is involved in the degradation of glucose through a non-phosphorylative variant of the Entner-Doudoroff pathway. In Saccharolobus solfataricus (strain ATCC 35092 / DSM 1617 / JCM 11322 / P2) (Sulfolobus solfataricus), this protein is Glucose 1-dehydrogenase 2.